Reading from the N-terminus, the 389-residue chain is Large envelope protein (389 aa).

M1 carries the post-translational modification N-acetylmethionine. The N-myristoyl glycine; by host moiety is linked to residue G2. Positions 2 to 108 are pre-S1; the sequence is GQNLSTSNPL…PPLRNTHPQA (107 aa). Residues 2–163 form a pre-S region; the sequence is GQNLSTSNPL…FSRIGDPALN (162 aa). Over 2-170 the chain is Virion surface; in external conformation; it reads GQNLSTSNPL…ALNMENITSG (169 aa). Residues 2-242 are Intravirion; in internal conformation-facing; it reads GQNLSTSNPL…PGYRWMCLRR (241 aa). N37 carries an O-linked (GalNAc...) threonine glycan. Residues 76–103 are disordered; it reads TLPANPPPASTNRQSGRQPTPLSPPLRN. Polar residues predominate over residues 85-95; it reads STNRQSGRQPT. Residues 109–163 are pre-S2; it reads MQWNSTTFHQTLQDPRVRGLYFPAGGSSSGTVNPVLTTASPLSSIFSRIGDPALN. Residues 171-191 traverse the membrane as a helical segment; sequence FLGPLLVLQAGFFLLTRILTI. The Intravirion; in external conformation portion of the chain corresponds to 192 to 242; the sequence is PQSLDSWWTSLNFLGGTTVCLGQNSQSPTSNHSPTSCPPTCPGYRWMCLRR. Residues 243-263 traverse the membrane as a helical segment; sequence FIIFLFILLLCLIFLLVLLDY. Topologically, residues 264–337 are virion surface; the sequence is QGMLPVCPLI…WASARFSWLS (74 aa). N-linked (GlcNAc...) asparagine; by host glycosylation occurs at N309. Residues 338–358 traverse the membrane as a helical segment; that stretch reads LLVPFVQWFVGLSPTVWLSVI. Residues 359 to 364 lie on the Intravirion side of the membrane; it reads WMMWYW. A helical membrane pass occupies residues 365–387; the sequence is GPSLYSILSPFLPLLPIFFCLWV. Residues 388–389 are Virion surface-facing; it reads YI.

This sequence belongs to the orthohepadnavirus major surface antigen family. In terms of assembly, in its internal form (Li-HBsAg), interacts with the capsid protein and with the isoform S. Interacts with host chaperone CANX. As to quaternary structure, associates with host chaperone CANX through its pre-S2 N glycan; this association may be essential for isoform M proper secretion. Interacts with isoform L. Interacts with the antigens of satellite virus HDV (HDVAgs); this interaction is required for encapsidation of HDV genomic RNA. Post-translationally, isoform M is N-terminally acetylated by host at a ratio of 90%, and N-glycosylated by host at the pre-S2 region. Myristoylated.

The protein localises to the virion membrane. In terms of biological role, the large envelope protein exists in two topological conformations, one which is termed 'external' or Le-HBsAg and the other 'internal' or Li-HBsAg. In its external conformation the protein attaches the virus to cell receptors and thereby initiating infection. This interaction determines the species specificity and liver tropism. This attachment induces virion internalization predominantly through caveolin-mediated endocytosis. The large envelope protein also assures fusion between virion membrane and endosomal membrane. In its internal conformation the protein plays a role in virion morphogenesis and mediates the contact with the nucleocapsid like a matrix protein. Functionally, the middle envelope protein plays an important role in the budding of the virion. It is involved in the induction of budding in a nucleocapsid independent way. In this process the majority of envelope proteins bud to form subviral lipoprotein particles of 22 nm of diameter that do not contain a nucleocapsid. This Homo sapiens (Human) protein is Large envelope protein.